We begin with the raw amino-acid sequence, 478 residues long: Multidrug resistance outer membrane protein MdtQ (478 aa).

The N-terminal stretch at 1–21 is a signal peptide; it reads MNRDSFYPAIACFPLLLMLAG. The N-palmitoyl cysteine moiety is linked to residue Cys22. Cys22 carries S-diacylglycerol cysteine lipidation.

The protein belongs to the outer membrane factor (OMF) (TC 1.B.17) family.

It localises to the cell outer membrane. Could be involved in resistance to puromycin, acriflavine and tetraphenylarsonium chloride. The sequence is that of Multidrug resistance outer membrane protein MdtQ (mdtQ) from Escherichia coli O6:H1 (strain CFT073 / ATCC 700928 / UPEC).